The primary structure comprises 383 residues: Acetylornithine deacetylase (383 aa).

His80 lines the Zn(2+) pocket. Asp82 is an active-site residue. Residue Asp112 participates in Zn(2+) binding. Glu144 is a catalytic residue. Glu145, Glu169, and His355 together coordinate Zn(2+).

Belongs to the peptidase M20A family. ArgE subfamily. As to quaternary structure, homodimer. Zn(2+) is required as a cofactor. It depends on Co(2+) as a cofactor. Requires glutathione as cofactor.

Its subcellular location is the cytoplasm. The catalysed reaction is N(2)-acetyl-L-ornithine + H2O = L-ornithine + acetate. The protein operates within amino-acid biosynthesis; L-arginine biosynthesis; L-ornithine from N(2)-acetyl-L-ornithine (linear): step 1/1. Catalyzes the hydrolysis of the amide bond of N(2)-acetylated L-amino acids. Cleaves the acetyl group from N-acetyl-L-ornithine to form L-ornithine, an intermediate in L-arginine biosynthesis pathway, and a branchpoint in the synthesis of polyamines. The sequence is that of Acetylornithine deacetylase from Salmonella choleraesuis (strain SC-B67).